We begin with the raw amino-acid sequence, 285 residues long: Ribosomal RNA small subunit methyltransferase I (285 aa).

Belongs to the methyltransferase superfamily. RsmI family.

It localises to the cytoplasm. The enzyme catalyses cytidine(1402) in 16S rRNA + S-adenosyl-L-methionine = 2'-O-methylcytidine(1402) in 16S rRNA + S-adenosyl-L-homocysteine + H(+). Its function is as follows. Catalyzes the 2'-O-methylation of the ribose of cytidine 1402 (C1402) in 16S rRNA. This is Ribosomal RNA small subunit methyltransferase I from Mycobacterium tuberculosis (strain CDC 1551 / Oshkosh).